The primary structure comprises 410 residues: Metacaspase-1B (410 aa).

The disordered stretch occupies residues 1–106 (MYHRNSAPPP…SFGKGAPSNY (106 aa)). Composition is skewed to pro residues over residues 7 to 23 (APPPPGWSGGYPPPQSQ) and 32 to 52 (PPYPPQGPPPPPAHSYSPPPT). Active-site residues include His201 and Cys257.

This sequence belongs to the peptidase C14B family.

Involved in cell death (apoptosis). The polypeptide is Metacaspase-1B (casB) (Aspergillus clavatus (strain ATCC 1007 / CBS 513.65 / DSM 816 / NCTC 3887 / NRRL 1 / QM 1276 / 107)).